The following is a 230-amino-acid chain: Ribonuclease 3 (230 aa).

An RNase III domain is found at 5-134 (NDTISKVINY…LIGAIYIDGG (130 aa)). E47 is a Mg(2+) binding site. Residue D51 is part of the active site. Mg(2+) contacts are provided by N120 and E123. The active site involves E123. The DRBM domain maps to 159 to 228 (DPKTSLQEWT…AELILEKIKK (70 aa)).

Belongs to the ribonuclease III family. As to quaternary structure, homodimer. Requires Mg(2+) as cofactor.

The protein resides in the cytoplasm. The catalysed reaction is Endonucleolytic cleavage to 5'-phosphomonoester.. In terms of biological role, digests double-stranded RNA. Involved in the processing of primary rRNA transcript to yield the immediate precursors to the large and small rRNAs (23S and 16S). Processes some mRNAs, and tRNAs when they are encoded in the rRNA operon. Processes pre-crRNA and tracrRNA of type II CRISPR loci if present in the organism. The chain is Ribonuclease 3 from Wolbachia pipientis subsp. Culex pipiens (strain wPip).